Reading from the N-terminus, the 127-residue chain is Protein P6 (127 aa).

It localises to the virion membrane. In Pseudoalteromonas espejiana (Bacteriophage PM2), this protein is Protein P6 (VI).